Here is a 101-residue protein sequence, read N- to C-terminus: Small ribosomal subunit protein uS14 (101 aa).

Belongs to the universal ribosomal protein uS14 family. In terms of assembly, part of the 30S ribosomal subunit. Contacts proteins S3 and S10.

Functionally, binds 16S rRNA, required for the assembly of 30S particles and may also be responsible for determining the conformation of the 16S rRNA at the A site. This Acinetobacter baumannii (strain AB307-0294) protein is Small ribosomal subunit protein uS14.